A 194-amino-acid chain; its full sequence is dCTP deaminase (194 aa).

Residues 110–115 (RSSLAR), Asp128, 136–138 (VLE), Tyr171, Lys178, and Gln182 each bind dCTP. Residue Glu138 is the Proton donor/acceptor of the active site.

It belongs to the dCTP deaminase family. As to quaternary structure, homotrimer.

The catalysed reaction is dCTP + H2O + H(+) = dUTP + NH4(+). The protein operates within pyrimidine metabolism; dUMP biosynthesis; dUMP from dCTP (dUTP route): step 1/2. In terms of biological role, catalyzes the deamination of dCTP to dUTP. The protein is dCTP deaminase of Haemophilus ducreyi (strain 35000HP / ATCC 700724).